The sequence spans 230 residues: Uracil-DNA glycosylase (230 aa).

Residue Asp70 is the Proton acceptor of the active site.

It belongs to the uracil-DNA glycosylase (UDG) superfamily. UNG family.

It localises to the cytoplasm. It carries out the reaction Hydrolyzes single-stranded DNA or mismatched double-stranded DNA and polynucleotides, releasing free uracil.. Functionally, excises uracil residues from the DNA which can arise as a result of misincorporation of dUMP residues by DNA polymerase or due to deamination of cytosine. In Campylobacter concisus (strain 13826), this protein is Uracil-DNA glycosylase.